A 479-amino-acid chain; its full sequence is UDP-N-acetylmuramate--L-alanine ligase (479 aa).

An ATP-binding site is contributed by 114–120 (GTHGKTT).

This sequence belongs to the MurCDEF family.

The protein resides in the cytoplasm. The catalysed reaction is UDP-N-acetyl-alpha-D-muramate + L-alanine + ATP = UDP-N-acetyl-alpha-D-muramoyl-L-alanine + ADP + phosphate + H(+). It functions in the pathway cell wall biogenesis; peptidoglycan biosynthesis. In terms of biological role, cell wall formation. The sequence is that of UDP-N-acetylmuramate--L-alanine ligase from Pelodictyon phaeoclathratiforme (strain DSM 5477 / BU-1).